Here is a 1047-residue protein sequence, read N- to C-terminus: Ribonucleoside-diphosphate reductase subunit alpha (1047 aa).

ATP-cone domains lie at 9–111, 118–219, and 237–327; these read CTIV…KAHR, LSVI…ARVR, and FEVL…EALD. Substrate-binding positions include Thr442, 457–458, Gly486, 670–674, and 857–861; these read SC, NLCTE, and PTATI. A disulfide bridge connects residues Cys458 and Cys687. Catalysis depends on Asn670, which acts as the Proton acceptor. The active-site Cysteine radical intermediate is Cys672. Glu674 (proton acceptor) is an active-site residue.

Belongs to the ribonucleoside diphosphate reductase large chain family. Tetramer of two alpha and two beta subunits.

It catalyses the reaction a 2'-deoxyribonucleoside 5'-diphosphate + [thioredoxin]-disulfide + H2O = a ribonucleoside 5'-diphosphate + [thioredoxin]-dithiol. Its activity is regulated as follows. Under complex allosteric control mediated by deoxynucleoside triphosphates and ATP binding. The type of nucleotide bound at the specificity site determines substrate preference. It seems probable that ATP makes the enzyme reduce CDP and UDP, dGTP favors ADP reduction and dTTP favors GDP reduction. Provides the precursors necessary for DNA synthesis. Catalyzes the biosynthesis of deoxyribonucleotides from the corresponding ribonucleotides. This is Ribonucleoside-diphosphate reductase subunit alpha (nrdA) from Chlamydia muridarum (strain MoPn / Nigg).